The sequence spans 96 residues: Aspartyl/glutamyl-tRNA(Asn/Gln) amidotransferase subunit C (96 aa).

It belongs to the GatC family. Heterotrimer of A, B and C subunits.

It carries out the reaction L-glutamyl-tRNA(Gln) + L-glutamine + ATP + H2O = L-glutaminyl-tRNA(Gln) + L-glutamate + ADP + phosphate + H(+). The catalysed reaction is L-aspartyl-tRNA(Asn) + L-glutamine + ATP + H2O = L-asparaginyl-tRNA(Asn) + L-glutamate + ADP + phosphate + 2 H(+). Its function is as follows. Allows the formation of correctly charged Asn-tRNA(Asn) or Gln-tRNA(Gln) through the transamidation of misacylated Asp-tRNA(Asn) or Glu-tRNA(Gln) in organisms which lack either or both of asparaginyl-tRNA or glutaminyl-tRNA synthetases. The reaction takes place in the presence of glutamine and ATP through an activated phospho-Asp-tRNA(Asn) or phospho-Glu-tRNA(Gln). This chain is Aspartyl/glutamyl-tRNA(Asn/Gln) amidotransferase subunit C, found in Sulfurovum sp. (strain NBC37-1).